The primary structure comprises 122 residues: UPF0145 protein BceJ2315_57450 (122 aa).

This sequence belongs to the UPF0145 family.

This Burkholderia cenocepacia (strain ATCC BAA-245 / DSM 16553 / LMG 16656 / NCTC 13227 / J2315 / CF5610) (Burkholderia cepacia (strain J2315)) protein is UPF0145 protein BceJ2315_57450.